The primary structure comprises 219 residues: Large ribosomal subunit protein bL25 (219 aa).

The interval 195–219 (EETTTTETSNEPEVIKKGKKEEEEK) is disordered. The segment covering 197-206 (TTTTETSNEP) has biased composition (low complexity). Residues 207–219 (EVIKKGKKEEEEK) show a composition bias toward basic and acidic residues.

It belongs to the bacterial ribosomal protein bL25 family. CTC subfamily. In terms of assembly, part of the 50S ribosomal subunit; part of the 5S rRNA/L5/L18/L25 subcomplex. Contacts the 5S rRNA. Binds to the 5S rRNA independently of L5 and L18.

Functionally, this is one of the proteins that binds to the 5S RNA in the ribosome where it forms part of the central protuberance. The protein is Large ribosomal subunit protein bL25 of Fervidobacterium nodosum (strain ATCC 35602 / DSM 5306 / Rt17-B1).